We begin with the raw amino-acid sequence, 259 residues long: (3R)-3-hydroxyacyl-CoA dehydrogenase (259 aa).

Residues Leu-13–Ile-21 and Asp-40–Leu-41 contribute to the NAD(+) site. Position 58 is a phosphoserine (Ser-58). Position 66 is an N6-acetyllysine (Lys-66). Ala-72–Val-74 lines the NAD(+) pocket. A substrate-binding site is contributed by Ser-154. Lys-158 bears the N6-succinyllysine mark. Tyr-167 serves as the catalytic Proton acceptor. NAD(+) is bound by residues Tyr-167–Lys-171 and Ile-200–Thr-202. Lys-171 carries the post-translational modification N6-succinyllysine.

It belongs to the short-chain dehydrogenases/reductases (SDR) family. Heterotetramer with CBR4; contains two molecules of HSD17B8 and CBR4. In terms of tissue distribution, expressed in ovary at protein level.

It is found in the mitochondrion matrix. The catalysed reaction is a (3R)-3-hydroxyacyl-CoA + NAD(+) = a 3-oxoacyl-CoA + NADH + H(+). The enzyme catalyses 17beta-estradiol + NAD(+) = estrone + NADH + H(+). It carries out the reaction testosterone + NAD(+) = androst-4-ene-3,17-dione + NADH + H(+). It catalyses the reaction 17beta-hydroxy-5alpha-androstan-3-one + NAD(+) = 5alpha-androstan-3,17-dione + NADH + H(+). Its pathway is steroid biosynthesis; estrogen biosynthesis. It functions in the pathway lipid metabolism; fatty acid biosynthesis. It participates in lipid metabolism; mitochondrial fatty acid beta-oxidation. Required for the solubility and assembly of the heterotetramer 3-ketoacyl-[acyl carrier protein] (ACP) reductase functional complex (KAR or KAR1) that forms part of the mitochondrial fatty acid synthase (mtFAS). Alpha-subunit of the KAR complex that acts as scaffold protein required for the stability of carbonyl reductase type-4 (CBR4, beta-subunit of the KAR complex) and for its 3-ketoacyl-ACP reductase activity, thereby participating in mitochondrial fatty acid biosynthesis. Catalyzes the NAD-dependent conversion of (3R)-3-hydroxyacyl-CoA into 3-ketoacyl-CoA (3-oxoacyl-CoA) with no chain length preference; this enzymatic activity is not needed for the KAR function. Prefers (3R)-3-hydroxyacyl-CoA over (3S)-3-hydroxyacyl-CoA and displays enzymatic activity only in the presence of NAD(+). Cooperates with enoyl-CoA hydratase 1 in mitochondria, together they constitute an alternative route to the auxiliary enzyme pathways for the breakdown of Z-PUFA (cis polyunsaturated fatty acid) enoyl-esters. NAD-dependent 17-beta-hydroxysteroid dehydrogenase with highest activity towards estradiol (17beta-estradiol or E2). Has very low activity towards testosterone and dihydrotestosterone (17beta-hydroxy-5alpha-androstan-3-one). Primarily an oxidative enzyme, it can switch to a reductive mode determined in the appropriate physiologic milieu and catalyze the reduction of estrone (E1) to form biologically active 17beta-estradiol. The chain is (3R)-3-hydroxyacyl-CoA dehydrogenase (Hsd17b8) from Rattus norvegicus (Rat).